The following is an 82-amino-acid chain: Transcription elongation factor 1 homolog (82 aa).

Zn(2+) is bound by residues C26, C29, C50, and C53.

It belongs to the ELOF1 family.

The protein resides in the nucleus. Transcription elongation factor implicated in the maintenance of proper chromatin structure in actively transcribed regions. The polypeptide is Transcription elongation factor 1 homolog (Drosophila melanogaster (Fruit fly)).